The chain runs to 621 residues: Acetolactate synthase (621 aa).

Residues 1–19 (MSAPTRRPAPDAPGAAGIA) show a composition bias toward low complexity. Positions 1 to 39 (MSAPTRRPAPDAPGAAGIAPAPPAPAAKPAAGKPKRIGP) are disordered. Glu89 lines the thiamine diphosphate pocket. Residues Arg190, 296–317 (HGTV…LGTR), and 339–358 (DIDP…IVGD) contribute to the FAD site. The segment at 432–512 (HDQMWAAQFI…IKVALINNGN (81 aa)) is thiamine pyrophosphate binding. Asp483 and Asn510 together coordinate Mg(2+).

The protein belongs to the TPP enzyme family. Mg(2+) is required as a cofactor. Thiamine diphosphate serves as cofactor.

It carries out the reaction 2 pyruvate + H(+) = (2S)-2-acetolactate + CO2. It functions in the pathway amino-acid biosynthesis; L-isoleucine biosynthesis; L-isoleucine from 2-oxobutanoate: step 1/4. It participates in amino-acid biosynthesis; L-valine biosynthesis; L-valine from pyruvate: step 1/4. The polypeptide is Acetolactate synthase (ilvB) (Mycobacterium avium).